The chain runs to 1078 residues: mRNA 3'-end-processing protein rna14 (1078 aa).

2 disordered regions span residues 15 to 209 (AMNA…DTPA) and 222 to 251 (QSEN…HDRV). A compositionally biased stretch (polar residues) spans 42 to 55 (KTLQDQYSASILDS). Low complexity predominate over residues 58 to 68 (SEIAPSSASPS). Positions 82–115 (DPSQPADSAYPSQTPSRADSQASVSAPASGTSVP) are enriched in polar residues. Positions 126–139 (VEDEDEDDAGDADY) are enriched in acidic residues. 2 stretches are compositionally biased toward polar residues: residues 151-170 (NTIS…NEDT) and 190-206 (FPNS…SKSD). HAT repeat units follow at residues 280–312 (NRID…MESE), 314–345 (NELY…YVRR), 356–391 (QSRR…FIRS), 405–438 (QKMD…FEMG), 475–508 (TTLP…WEKG), and 520–552 (AFKA…FCFL). Disordered regions lie at residues 632-663 (ETFA…ESMK) and 851-950 (PTVV…QGSP). Over residues 879–894 (GTPSSRYPDASVTNSP) the composition is skewed to polar residues. Over residues 896-907 (RPLEDFDDEMNR) the composition is skewed to basic and acidic residues. The span at 931-949 (RTQQVISNQTGSQFRSQGS) shows a compositional bias: polar residues.

It localises to the nucleus. It is found in the cytoplasm. In terms of biological role, component of the cleavage factor IA (CFIA) complex, which is involved in the endonucleolytic cleavage during polyadenylation-dependent pre-mRNA 3'-end formation. In Aspergillus oryzae (strain ATCC 42149 / RIB 40) (Yellow koji mold), this protein is mRNA 3'-end-processing protein rna14 (rna14).